Reading from the N-terminus, the 78-residue chain is Putative membrane protein insertion efficiency factor (78 aa).

Belongs to the UPF0161 family.

It is found in the cell membrane. Its function is as follows. Could be involved in insertion of integral membrane proteins into the membrane. This is Putative membrane protein insertion efficiency factor from Bacillus anthracis (strain A0248).